The sequence spans 739 residues: Nucleoprotein (739 aa).

A coiled-coil region spans residues 334-363; that stretch reads VNVGEQYQQLREAATEAEKQLQQYAESREL. Residues 415–646 form a disordered region; that stretch reads PKTSGHYDDD…QDSDNTQPEH (232 aa). Composition is skewed to low complexity over residues 449 to 458 and 504 to 514; these read SQDTTIPDVV and KGGQQKNSQKG. Polar residues predominate over residues 520–530; it reads RQTQSRPTQNV. Residues 567–579 show a composition bias toward acidic residues; it reads EEADPLDDADDET. Residues 611–638 show a composition bias toward basic and acidic residues; it reads YRDHSEKRELPQDEQQDQDHTQEARNQD.

This sequence belongs to the filoviruses nucleoprotein family. Homooligomer. Homomultimerizes to form the nucleocapsid. Binds to viral genomic RNA. Interacts with VP35 and VP30 to form the nucleocapsid. Interacts with host PPP2R5C; this interaction leads to VP30 dephosphorylation and viral transcription. Interacts with VP24; this interaction facilitates nucleocapsid assembly and genome packaging. Interacts with matrix protein VP40; this interaction allows recruitment of the nucleocapsid into progeny virions. Interacts with host STAU1. Interacts with host NXF1 (via RNA-binding domain); this interaction recruits NXF1 to the inclusion bodies were viral replication takes place, probably to export viral mRNA-NXF1 complexes from these sites. Interacts with host CCDC92; this interaction sequesters NP in the host cytoplasm. Interacts with host TRIM14. Phosphorylated and O-glycosylated by host. Acetylated by host EP300 in vitro.

It localises to the virion. The protein resides in the host cytoplasm. Functionally, oligomerizes into helical capsid to encapsidate the viral genome, protecting it from nucleases and the cellular innate immune response. VP35 binds to and stabilizes monomeric NP, keeping it soluble. Upon virus replication, NP is recruited to bind cooperatively viral genomic RNA and VP35 is released. The encapsidated genomic RNA is termed the nucleocapsid and serves as template for transcription and replication. The nucleocapsid is helical with a pitch of 10.81 NP per turn and a diameter of about 22nm. Each NP binds to six nucleotides of viral genomic RNA, three being exposed to the solvant and three hidden into the nucleocapsid. Also recruits host PPP2R5C phosphatase to dephosphorylate VP30 and thereby promote viral transcription. Upon virion assembly and budding, NP binds to VP24 and possibly host STAU1. The chain is Nucleoprotein (NP) from Epomops franqueti (Franquet's epauletted fruit bat).